The primary structure comprises 161 residues: S-ribosylhomocysteine lyase (161 aa).

Fe cation-binding residues include H58, H62, and C128.

It belongs to the LuxS family. Homodimer. Requires Fe cation as cofactor.

The enzyme catalyses S-(5-deoxy-D-ribos-5-yl)-L-homocysteine = (S)-4,5-dihydroxypentane-2,3-dione + L-homocysteine. Its function is as follows. Involved in the synthesis of autoinducer 2 (AI-2) which is secreted by bacteria and is used to communicate both the cell density and the metabolic potential of the environment. The regulation of gene expression in response to changes in cell density is called quorum sensing. Catalyzes the transformation of S-ribosylhomocysteine (RHC) to homocysteine (HC) and 4,5-dihydroxy-2,3-pentadione (DPD). The sequence is that of S-ribosylhomocysteine lyase from Bifidobacterium adolescentis (strain ATCC 15703 / DSM 20083 / NCTC 11814 / E194a).